The chain runs to 340 residues: Ketol-acid reductoisomerase (NADP(+)) (340 aa).

One can recognise a KARI N-terminal Rossmann domain in the interval 3–183 (INVYYDKDCD…GGGRTGIIET (181 aa)). Residues 26–29 (FGSQ), Ser-54, and 84–87 (DELQ) contribute to the NADP(+) site. His-109 is a catalytic residue. Gly-135 lines the NADP(+) pocket. Residues 184-329 (TFKDETETDL…KKLRAMMPWI (146 aa)) form the KARI C-terminal knotted domain. Mg(2+) contacts are provided by Asp-192, Glu-196, Glu-228, and Glu-232. A substrate-binding site is contributed by Ser-253.

It belongs to the ketol-acid reductoisomerase family. Mg(2+) is required as a cofactor.

The enzyme catalyses (2R)-2,3-dihydroxy-3-methylbutanoate + NADP(+) = (2S)-2-acetolactate + NADPH + H(+). The catalysed reaction is (2R,3R)-2,3-dihydroxy-3-methylpentanoate + NADP(+) = (S)-2-ethyl-2-hydroxy-3-oxobutanoate + NADPH + H(+). It functions in the pathway amino-acid biosynthesis; L-isoleucine biosynthesis; L-isoleucine from 2-oxobutanoate: step 2/4. It participates in amino-acid biosynthesis; L-valine biosynthesis; L-valine from pyruvate: step 2/4. In terms of biological role, involved in the biosynthesis of branched-chain amino acids (BCAA). Catalyzes an alkyl-migration followed by a ketol-acid reduction of (S)-2-acetolactate (S2AL) to yield (R)-2,3-dihydroxy-isovalerate. In the isomerase reaction, S2AL is rearranged via a Mg-dependent methyl migration to produce 3-hydroxy-3-methyl-2-ketobutyrate (HMKB). In the reductase reaction, this 2-ketoacid undergoes a metal-dependent reduction by NADPH to yield (R)-2,3-dihydroxy-isovalerate. This Campylobacter concisus (strain 13826) protein is Ketol-acid reductoisomerase (NADP(+)).